Consider the following 323-residue polypeptide: Probable pectate lyase A (323 aa).

The N-terminal stretch at 1–20 is a signal peptide; sequence MTNFKWIVAAAGLLSGQVLA. A glycan (N-linked (GlcNAc...) asparagine) is linked at N95. 3 residues coordinate Ca(2+): D136, D165, and D169. R222 is a catalytic residue.

This sequence belongs to the polysaccharide lyase 1 family. It depends on Ca(2+) as a cofactor.

It is found in the secreted. It catalyses the reaction Eliminative cleavage of (1-&gt;4)-alpha-D-galacturonan to give oligosaccharides with 4-deoxy-alpha-D-galact-4-enuronosyl groups at their non-reducing ends.. Functionally, pectinolytic enzyme consist of four classes of enzymes: pectin lyase, polygalacturonase, pectin methylesterase and rhamnogalacturonase. Among pectinolytic enzymes, pectin lyase is the most important in depolymerization of pectin, since it cleaves internal glycosidic bonds of highly methylated pectins. Favors pectate, the anion, over pectin, the methyl ester. The protein is Probable pectate lyase A (plyA) of Aspergillus niger (strain ATCC MYA-4892 / CBS 513.88 / FGSC A1513).